The primary structure comprises 201 residues: Probable nicotinate-nucleotide adenylyltransferase (201 aa).

The protein belongs to the NadD family.

It carries out the reaction nicotinate beta-D-ribonucleotide + ATP + H(+) = deamido-NAD(+) + diphosphate. It participates in cofactor biosynthesis; NAD(+) biosynthesis; deamido-NAD(+) from nicotinate D-ribonucleotide: step 1/1. Catalyzes the reversible adenylation of nicotinate mononucleotide (NaMN) to nicotinic acid adenine dinucleotide (NaAD). In Clostridium botulinum (strain Okra / Type B1), this protein is Probable nicotinate-nucleotide adenylyltransferase.